The chain runs to 117 residues: Hydrogenase maturation factor HypA (117 aa).

His-2 is a Ni(2+) binding site. Residues Cys-73, Cys-76, Cys-89, and Cys-92 each coordinate Zn(2+).

It belongs to the HypA/HybF family.

Involved in the maturation of [NiFe] hydrogenases. Required for nickel insertion into the metal center of the hydrogenase. This chain is Hydrogenase maturation factor HypA, found in Shewanella baltica (strain OS195).